Reading from the N-terminus, the 365-residue chain is Validamycin A dioxygenase (365 aa).

One can recognise a Fe2OG dioxygenase domain in the interval 174-284 (HATWTQSVNW…LVSLVYFFDA (111 aa)). The Fe cation site is built by His-203, Asp-205, and His-261. The disordered stretch occupies residues 331–365 (GELSLSRPGSADSPGSSPADDHPSRPGRHPAQGPQ). Residues 336-348 (SRPGSADSPGSSP) show a composition bias toward low complexity.

It belongs to the iron/ascorbate-dependent oxidoreductase family. Requires Fe(2+) as cofactor.

The catalysed reaction is validamycin A + 2-oxoglutarate + O2 = validamycin B + succinate + CO2 + H(+). It catalyses the reaction validoxylamine A + 2-oxoglutarate + O2 = validoxylamine B + succinate + CO2 + H(+). The protein operates within antibiotic biosynthesis. In terms of biological role, involved in the biosynthesis of validamycin B, a component of the antifungal and antibiotic validamycin complex used as a crop protectant. Catalyzes the regioselective hydroxylation of validamycin A (4-O-beta-D-glucopyranosyl-validoxylamine A) at the C-6 position to yield validamycin B. To a lesser extent, also able to convert validoxylamine A to its hydroxylated derivative. In Streptomyces hygroscopicus subsp. limoneus, this protein is Validamycin A dioxygenase.